The following is a 159-amino-acid chain: Phosphopantetheine adenylyltransferase (159 aa).

A substrate-binding site is contributed by S9. ATP is bound by residues S9–F10 and H17. 3 residues coordinate substrate: K41, L73, and R87. ATP is bound by residues G88–R90, E98, and Y123–S129.

This sequence belongs to the bacterial CoaD family. As to quaternary structure, homohexamer. The cofactor is Mg(2+).

It localises to the cytoplasm. The enzyme catalyses (R)-4'-phosphopantetheine + ATP + H(+) = 3'-dephospho-CoA + diphosphate. Its pathway is cofactor biosynthesis; coenzyme A biosynthesis; CoA from (R)-pantothenate: step 4/5. Its function is as follows. Reversibly transfers an adenylyl group from ATP to 4'-phosphopantetheine, yielding dephospho-CoA (dPCoA) and pyrophosphate. The protein is Phosphopantetheine adenylyltransferase of Shouchella clausii (strain KSM-K16) (Alkalihalobacillus clausii).